The chain runs to 213 residues: Orotate phosphoribosyltransferase (213 aa).

A 5-phospho-alpha-D-ribose 1-diphosphate-binding site is contributed by lysine 26. Orotate is bound at residue 34-35 (FF). 5-phospho-alpha-D-ribose 1-diphosphate is bound by residues 72–73 (YK), arginine 99, lysine 100, lysine 103, histidine 105, and 124–132 (DDVITAGTA). Residues threonine 128 and arginine 156 each coordinate orotate.

It belongs to the purine/pyrimidine phosphoribosyltransferase family. PyrE subfamily. Homodimer. Mg(2+) is required as a cofactor.

It carries out the reaction orotidine 5'-phosphate + diphosphate = orotate + 5-phospho-alpha-D-ribose 1-diphosphate. It functions in the pathway pyrimidine metabolism; UMP biosynthesis via de novo pathway; UMP from orotate: step 1/2. Functionally, catalyzes the transfer of a ribosyl phosphate group from 5-phosphoribose 1-diphosphate to orotate, leading to the formation of orotidine monophosphate (OMP). The polypeptide is Orotate phosphoribosyltransferase (Salmonella agona (strain SL483)).